The sequence spans 421 residues: Membrane-associated protein UidC (421 aa).

Residues 1–23 (MRKIVAMAVICLTAASGLTSAYA) form the signal peptide.

It belongs to the outer membrane porin (Opr) (TC 1.B.25) family.

The protein localises to the cell outer membrane. Functionally, enhances the activity of the UidB (GusB) glucuronide transporter, on its own however it has no transport activity. Glucuronide transport does not occur in strain K12 due to a variant at position 100 of the UidB (GusB, AC P0CE44, AC P0CE45) protein. In Escherichia coli (strain K12), this protein is Membrane-associated protein UidC (uidC).